We begin with the raw amino-acid sequence, 51 residues long: Large ribosomal subunit protein eL40 (51 aa).

The protein belongs to the eukaryotic ribosomal protein eL40 family.

This chain is Large ribosomal subunit protein eL40, found in Thermococcus gammatolerans (strain DSM 15229 / JCM 11827 / EJ3).